Here is a 419-residue protein sequence, read N- to C-terminus: DNA polymerase IV (419 aa).

In terms of domain architecture, UmuC spans Ile-12–Gly-193. Residues Asp-16 and Asp-112 each contribute to the Mg(2+) site. Glu-113 is an active-site residue. The segment at Ile-388–Pro-419 is disordered.

Belongs to the DNA polymerase type-Y family. As to quaternary structure, monomer. It depends on Mg(2+) as a cofactor.

Its subcellular location is the cytoplasm. The enzyme catalyses DNA(n) + a 2'-deoxyribonucleoside 5'-triphosphate = DNA(n+1) + diphosphate. Poorly processive, error-prone DNA polymerase involved in untargeted mutagenesis. Copies undamaged DNA at stalled replication forks, which arise in vivo from mismatched or misaligned primer ends. These misaligned primers can be extended by PolIV. Exhibits no 3'-5' exonuclease (proofreading) activity. May be involved in translesional synthesis, in conjunction with the beta clamp from PolIII. The sequence is that of DNA polymerase IV from Oceanobacillus iheyensis (strain DSM 14371 / CIP 107618 / JCM 11309 / KCTC 3954 / HTE831).